We begin with the raw amino-acid sequence, 179 residues long: Ribosome maturation factor RimM (179 aa).

The region spanning 95 to 174 is the PRC barrel domain; the sequence is KDEFFYFDIL…QIFCTQDAFL (80 aa).

Belongs to the RimM family. In terms of assembly, binds ribosomal protein uS19.

The protein resides in the cytoplasm. An accessory protein needed during the final step in the assembly of 30S ribosomal subunit, possibly for assembly of the head region. Essential for efficient processing of 16S rRNA. May be needed both before and after RbfA during the maturation of 16S rRNA. It has affinity for free ribosomal 30S subunits but not for 70S ribosomes. This Campylobacter jejuni subsp. jejuni serotype O:6 (strain 81116 / NCTC 11828) protein is Ribosome maturation factor RimM.